Consider the following 443-residue polypeptide: Phosphoglucosamine mutase (443 aa).

Ser-100 (phosphoserine intermediate) is an active-site residue. Mg(2+)-binding residues include Ser-100, Asp-240, Asp-242, and Asp-244. Residue Ser-100 is modified to Phosphoserine.

It belongs to the phosphohexose mutase family. Requires Mg(2+) as cofactor. Activated by phosphorylation.

It catalyses the reaction alpha-D-glucosamine 1-phosphate = D-glucosamine 6-phosphate. In terms of biological role, catalyzes the conversion of glucosamine-6-phosphate to glucosamine-1-phosphate. The protein is Phosphoglucosamine mutase of Carboxydothermus hydrogenoformans (strain ATCC BAA-161 / DSM 6008 / Z-2901).